Here is a 445-residue protein sequence, read N- to C-terminus: C-terminal-binding protein 2 (445 aa).

Position 22 is an asymmetric dimethylarginine (Arg-22). NAD(+)-binding positions include Ser-106, 186 to 191 (IGFGRT), Asp-210, 243 to 249 (CNLNEHN), 270 to 272 (AAR), and Asp-296. The active site involves Arg-272. Glu-301 is a catalytic residue. His-321 serves as the catalytic Proton donor. 321–324 (HTAW) is a binding site for NAD(+). Residues 414–445 (THNLPTVAHPSQAPSPNQPTKHGDNREHPNEQ) form a disordered region. Ser-428 carries the post-translational modification Phosphoserine. Residues 434 to 445 (KHGDNREHPNEQ) show a composition bias toward basic and acidic residues.

It belongs to the D-isomer specific 2-hydroxyacid dehydrogenase family. Can form homodimers or heterodimers of CTBP1 and CTBP2. Interacts with HIPK2 and ZNF217. Interacts with PRDM16; represses white adipose tissue (WAT)-specific genes expression. Interacts with PNN, NRIP1 and WIZ. Interacts with MCRIP1. In terms of assembly, (Microbial infection) Interacts with human adenovirus 5 E1A protein; this interaction seems to potentiate viral replication. In terms of tissue distribution, ubiquitous. Highest levels in heart, skeletal muscle, and pancreas.

It localises to the nucleus. The protein localises to the synapse. In terms of biological role, corepressor targeting diverse transcription regulators. Functions in brown adipose tissue (BAT) differentiation. Its function is as follows. Isoform 2 probably acts as a scaffold for specialized synapses. The polypeptide is C-terminal-binding protein 2 (CTBP2) (Homo sapiens (Human)).